A 217-amino-acid polypeptide reads, in one-letter code: ATP-dependent Clp protease proteolytic subunit (217 aa).

Residue S121 is the Nucleophile of the active site. H146 is a catalytic residue.

It belongs to the peptidase S14 family. In terms of assembly, fourteen ClpP subunits assemble into 2 heptameric rings which stack back to back to give a disk-like structure with a central cavity, resembling the structure of eukaryotic proteasomes.

It is found in the cytoplasm. It carries out the reaction Hydrolysis of proteins to small peptides in the presence of ATP and magnesium. alpha-casein is the usual test substrate. In the absence of ATP, only oligopeptides shorter than five residues are hydrolyzed (such as succinyl-Leu-Tyr-|-NHMec, and Leu-Tyr-Leu-|-Tyr-Trp, in which cleavage of the -Tyr-|-Leu- and -Tyr-|-Trp bonds also occurs).. Functionally, cleaves peptides in various proteins in a process that requires ATP hydrolysis. Has a chymotrypsin-like activity. Plays a major role in the degradation of misfolded proteins. This is ATP-dependent Clp protease proteolytic subunit from Burkholderia cenocepacia (strain HI2424).